The following is a 302-amino-acid chain: Dioxygenase ALT11 (302 aa).

The disordered stretch occupies residues 1-22 (MSSPELPSQMGVPNGHTKLQEV). Fe cation is bound by residues histidine 147, aspartate 149, and histidine 223.

The protein belongs to the PhyH family. As to quaternary structure, homodimer. The cofactor is Fe cation.

It participates in mycotoxin biosynthesis. Its function is as follows. Dioxygenase; part of the gene cluster that mediates the biosynthesis of the host-selective toxins (HSTs) AAL-toxins, sphinganine-analog mycotoxins responsible for Alternaria stem canker on tomato by the tomato pathotype. The biosynthesis starts with the polyketide synthase ALT1-catalyzed C-16 carbon chain assembly from one starter acetyl-CoA unit with malonyl-CoA extender units. ALT1 also selectively transfers methyl groups at the first and the third cycle of chain elongation for AAL toxin. The C-16 polyketide chain is released from the enzyme by a nucleophilic attack of a carbanion, which is derived from R-carbon of glycin by decarboxylation, on the carbonyl carbon of polyketide acyl chain. This step is probably catalyzed by a pyridoxal 5'-phosphate-dependent aminoacyl transferase ALT4. The respective functions of the other enzymes encoded by the cluster have still to be elucidated. The sphingosine N-acyltransferase-like protein ALT7 seems not to act as a resistance/self-tolerance factor against the toxin in the toxin biosynthetic gene cluster, contrary to what is expected. The sequence is that of Dioxygenase ALT11 from Alternaria alternata (Alternaria rot fungus).